A 198-amino-acid chain; its full sequence is Protein XA-1 (198 aa).

The first 18 residues, 1–18 (MFFYVLLLALMAQGWSLP), serve as a signal peptide directing secretion. The tract at residues 17–198 (LPQGKTGEDS…KHGQEQGKKH (182 aa)) is disordered. A compositionally biased stretch (pro residues) spans 29 to 44 (FRPPSPPMGPSLPPPV). Residues 46 to 59 (HDLHRPSGHPEEFR) show a composition bias toward basic and acidic residues. Residues 76–86 (GRPKRDLHHGK) are compositionally biased toward basic residues. Positions 95–104 (HTGEVLHHTD) are enriched in basic and acidic residues. The segment covering 134–145 (HGRHRRDLHHGK) has biased composition (basic residues). Basic and acidic residues predominate over residues 181 to 198 (NSSEEKRPKHGQEQGKKH).

In terms of tissue distribution, expressed in the periphery of the cement gland as well as in the region of the hatching gland.

Its subcellular location is the secreted. The sequence is that of Protein XA-1 from Xenopus laevis (African clawed frog).